Consider the following 552-residue polypeptide: ATP synthase subunit alpha (552 aa).

Residue 173–180 (GDRQTGKT) participates in ATP binding. Positions 526-552 (ASPLDPSAVRKESIPVHRAPARTDDEG) are disordered. Positions 533 to 552 (AVRKESIPVHRAPARTDDEG) are enriched in basic and acidic residues.

Belongs to the ATPase alpha/beta chains family. F-type ATPases have 2 components, CF(1) - the catalytic core - and CF(0) - the membrane proton channel. CF(1) has five subunits: alpha(3), beta(3), gamma(1), delta(1), epsilon(1). CF(0) has three main subunits: a(1), b(2) and c(9-12). The alpha and beta chains form an alternating ring which encloses part of the gamma chain. CF(1) is attached to CF(0) by a central stalk formed by the gamma and epsilon chains, while a peripheral stalk is formed by the delta and b chains.

The protein resides in the cell membrane. It catalyses the reaction ATP + H2O + 4 H(+)(in) = ADP + phosphate + 5 H(+)(out). Functionally, produces ATP from ADP in the presence of a proton gradient across the membrane. The alpha chain is a regulatory subunit. This is ATP synthase subunit alpha from Frankia alni (strain DSM 45986 / CECT 9034 / ACN14a).